The chain runs to 438 residues: Serine hydroxymethyltransferase (438 aa).

(6S)-5,6,7,8-tetrahydrofolate contacts are provided by residues Leu-135 and 139 to 141 (GHL). Lys-244 is subject to N6-(pyridoxal phosphate)lysine. Residues 361–383 (GVPNDPLPPVKTSGIRVGSPAGT) are disordered.

It belongs to the SHMT family. As to quaternary structure, homodimer. The cofactor is pyridoxal 5'-phosphate.

The protein localises to the cytoplasm. The enzyme catalyses (6R)-5,10-methylene-5,6,7,8-tetrahydrofolate + glycine + H2O = (6S)-5,6,7,8-tetrahydrofolate + L-serine. It participates in one-carbon metabolism; tetrahydrofolate interconversion. The protein operates within amino-acid biosynthesis; glycine biosynthesis; glycine from L-serine: step 1/1. Catalyzes the reversible interconversion of serine and glycine with tetrahydrofolate (THF) serving as the one-carbon carrier. This reaction serves as the major source of one-carbon groups required for the biosynthesis of purines, thymidylate, methionine, and other important biomolecules. Also exhibits THF-independent aldolase activity toward beta-hydroxyamino acids, producing glycine and aldehydes, via a retro-aldol mechanism. The sequence is that of Serine hydroxymethyltransferase from Rhizorhabdus wittichii (strain DSM 6014 / CCUG 31198 / JCM 15750 / NBRC 105917 / EY 4224 / RW1) (Sphingomonas wittichii).